The primary structure comprises 142 residues: DNA-directed RNA polymerase subunit omega (142 aa).

Residues 93–142 (AWSVPEAGGDEGGDASELLDDEGEGAAAGAEPDFSEMDVPLADLADEDKI) form a disordered region. Residues 100–116 (GGDEGGDASELLDDEGE) are compositionally biased toward acidic residues.

It belongs to the RNA polymerase subunit omega family. As to quaternary structure, the RNAP catalytic core consists of 2 alpha, 1 beta, 1 beta' and 1 omega subunit. When a sigma factor is associated with the core the holoenzyme is formed, which can initiate transcription.

It catalyses the reaction RNA(n) + a ribonucleoside 5'-triphosphate = RNA(n+1) + diphosphate. In terms of biological role, promotes RNA polymerase assembly. Latches the N- and C-terminal regions of the beta' subunit thereby facilitating its interaction with the beta and alpha subunits. The protein is DNA-directed RNA polymerase subunit omega of Rhodospirillum centenum (strain ATCC 51521 / SW).